The primary structure comprises 159 residues: 17 kDa surface antigen (159 aa).

An N-terminal signal peptide occupies residues 1–19 (MKLLSKIMIIALAASMLQA). Cys20 carries the N-palmitoyl cysteine lipid modification. A lipid anchor (S-diacylglycerol cysteine) is attached at Cys20.

It belongs to the rickettsiale 17 kDa surface antigen family.

It is found in the cell outer membrane. The protein is 17 kDa surface antigen (omp) of Rickettsia prowazekii (strain Madrid E).